The chain runs to 56 residues: Photosystem II reaction center protein K (56 aa).

The propeptide occupies 1–19 (MLNFLLQNTFVLWSNFILC). Residues 35–55 (MPVIPVFFFLLAFVWQAAVSF) traverse the membrane as a helical segment.

This sequence belongs to the PsbK family. PSII is composed of 1 copy each of membrane proteins PsbA, PsbB, PsbC, PsbD, PsbE, PsbF, PsbH, PsbI, PsbJ, PsbK, PsbL, PsbM, PsbT, PsbX, PsbY, PsbZ, Psb30/Ycf12, at least 3 peripheral proteins of the oxygen-evolving complex and a large number of cofactors. It forms dimeric complexes.

It localises to the plastid. It is found in the chloroplast thylakoid membrane. Functionally, one of the components of the core complex of photosystem II (PSII). PSII is a light-driven water:plastoquinone oxidoreductase that uses light energy to abstract electrons from H(2)O, generating O(2) and a proton gradient subsequently used for ATP formation. It consists of a core antenna complex that captures photons, and an electron transfer chain that converts photonic excitation into a charge separation. The polypeptide is Photosystem II reaction center protein K (Welwitschia mirabilis (Tree tumbo)).